We begin with the raw amino-acid sequence, 794 residues long: Protocadherin beta-6 (794 aa).

Positions 1 to 27 (MMQTKVQNKKRQVAFFILLMLWGEVGS) are cleaved as a signal peptide. Topologically, residues 28–688 (ESIQYSVLEE…AQADLLTVYL (661 aa)) are extracellular. Cadherin domains lie at 34 to 132 (VLEE…APEF), 137 to 241 (MLLK…VPEF), 246 to 345 (YEAQ…APEL), 350 to 449 (FISP…APAF), and 454 to 559 (YTLF…SPFV). Asparagine 46 is a glycosylation site (N-linked (GlcNAc...) asparagine). Cysteine 95 and cysteine 101 are disulfide-bonded. N-linked (GlcNAc...) asparagine glycosylation occurs at asparagine 183. Asparagine 416 carries N-linked (GlcNAc...) asparagine glycosylation. The N-linked (GlcNAc...) asparagine glycan is linked to asparagine 565. In terms of domain architecture, Cadherin 6 spans 566–669 (GSAPCTELVP…LVDGFSQPYL (104 aa)). The chain crosses the membrane as a helical span at residues 689-709 (VVALASVSSLFLFSVLLFVAV). At 710–794 (RLCRRSRAAS…PTSRNSFPFS (85 aa)) the chain is on the cytoplasmic side. The tract at residues 773-794 (PPQGTEREMEETPTSRNSFPFS) is disordered. The segment covering 784 to 794 (TPTSRNSFPFS) has biased composition (polar residues).

In terms of assembly, forms homodimers in trans (molecules expressed by two different cells). Forms promiscuous heterodimers in cis (at the plasma membrane of the same cell) with other protocadherins.

The protein localises to the cell membrane. Calcium-dependent cell-adhesion protein involved in cells self-recognition and non-self discrimination. Thereby, it is involved in the establishment and maintenance of specific neuronal connections in the brain. The polypeptide is Protocadherin beta-6 (Pan troglodytes (Chimpanzee)).